We begin with the raw amino-acid sequence, 365 residues long: Mitogen-activated protein kinase HOG1A (365 aa).

The 280-residue stretch at 24–303 (YTDLQPVGMG…AADALAHPYL (280 aa)) folds into the Protein kinase domain. ATP contacts are provided by residues 30-38 (VGMGAFGLL) and Lys-53. Asp-145 acts as the Proton acceptor in catalysis. The residue at position 175 (Thr-175) is a Phosphothreonine. The TXY signature appears at 175-177 (TGY). Tyr-177 carries the phosphotyrosine modification.

It belongs to the protein kinase superfamily. Ser/Thr protein kinase family. MAP kinase subfamily. HOG1 sub-subfamily. Requires Mg(2+) as cofactor. In terms of processing, phosphorylated. Dually phosphorylated on Thr-175 and Tyr-177, which activates the enzyme. Rapidly dephosphorylated upon either hypo- or hyperosmotic shock.

The protein localises to the cytoplasm. The protein resides in the nucleus. The enzyme catalyses L-seryl-[protein] + ATP = O-phospho-L-seryl-[protein] + ADP + H(+). It catalyses the reaction L-threonyl-[protein] + ATP = O-phospho-L-threonyl-[protein] + ADP + H(+). Activated by tyrosine and threonine phosphorylation. Proline-directed serine/threonine-protein kinase involved in a signal transduction pathway that is activated by changes in the osmolarity of the extracellular environment. Controls osmotic regulation of transcription of target genes. The sequence is that of Mitogen-activated protein kinase HOG1A (HOG1A) from Wallemia ichthyophaga (strain EXF-994 / CBS 113033).